The sequence spans 363 residues: MSLLYLVALFVASICSVTAQTWTSCNPLTTTCPPDQALGINTTFTFNKTLDDTIWNVTNGVLSHTDEGTEFTITGENQSPTMQSNFYIFFGIVESHVKMAKGAGIISSIVLQSDDLDEIDWEWVGYNTSEVQSNYFGKGNNETFNRGGYHYVPNADTEFHNYTTYWTQEKLEWWIDGKLARTLTYEDSQGAGKYYPQTPCNIRYGIWPAGIKGNAQGTIEWAGGLVDYSKAPFTMVLQSVRVHDFHTGKEYNYTDHSGSWQSIDVIAGNSTIANAIQNPPKSLSEKWAELPTGAKAGVYIGAGCVGAALLAGFIFFFIAQRKKGRLEHALEDAKWANERTEMSTFQNDWKQSEWKHKGYQPVN.

The signal sequence occupies residues 1–19; that stretch reads MSLLYLVALFVASICSVTA. A disulfide bond links Cys-25 and Cys-32. The 212-residue stretch at 26–237 folds into the GH16 domain; that stretch reads NPLTTTCPPD…YSKAPFTMVL (212 aa). Residues Asn-41, Asn-47, and Asn-56 are each glycosylated (N-linked (GlcNAc...) asparagine). Residue Glu-118 is the Nucleophile of the active site. Glu-122 (proton donor) is an active-site residue. Glu-122 lines the chitin pocket. N-linked (GlcNAc...) asparagine glycans are attached at residues Asn-127, Asn-141, and Asn-161. The chitin site is built by Arg-203, Trp-207, and Thr-218. Residues Asn-252 and Asn-269 are each glycosylated (N-linked (GlcNAc...) asparagine). A helical transmembrane segment spans residues 298-318; that stretch reads VYIGAGCVGAALLAGFIFFFI.

The protein belongs to the glycosyl hydrolase 16 family. CRH1 subfamily. The GPI-like anchor contains a phosphoceramide lipid group. The anchor position has not been determined.

It localises to the cell membrane. The protein localises to the secreted. The protein resides in the cell wall. The catalysed reaction is Random endo-hydrolysis of N-acetyl-beta-D-glucosaminide (1-&gt;4)-beta-linkages in chitin and chitodextrins.. Functionally, dual chitinase/transglycosylase that plays a role in cell wall architecture. Chitinase and transglycosylase activities are coupled. Required for the polysaccharide cross-linking at the septa and the cell wall. More specifically, transfers chitin to 1,6-beta-glucan in the cell wall. The protein is Crh-like protein 3 of Aspergillus fumigatus (strain ATCC MYA-4609 / CBS 101355 / FGSC A1100 / Af293) (Neosartorya fumigata).